We begin with the raw amino-acid sequence, 152 residues long: Ribosome maturation factor RimP (152 aa).

It belongs to the RimP family.

The protein localises to the cytoplasm. In terms of biological role, required for maturation of 30S ribosomal subunits. This is Ribosome maturation factor RimP from Ectopseudomonas mendocina (strain ymp) (Pseudomonas mendocina).